We begin with the raw amino-acid sequence, 552 residues long: CTP synthase (552 aa).

The amidoligase domain stretch occupies residues 1–271; the sequence is MASAASSKHL…DAFVVRRLGL (271 aa). S18 provides a ligand contact to CTP. S18 is a UTP binding site. ATP-binding positions include 19-24 and D76; that span reads SLGKGL. The Mg(2+) site is built by D76 and E145. Residues 152–154, 192–197, and K228 each bind CTP; these read DIE and KTKPTQ. UTP is bound by residues 192 to 197 and K228; that span reads KTKPTQ. Residues 296–546 enclose the Glutamine amidotransferase type-1 domain; that stretch reads TIALVGKYVD…IEAALKYSAG (251 aa). G359 is a binding site for L-glutamine. C386 acts as the Nucleophile; for glutamine hydrolysis in catalysis. Residues 387 to 390, E410, and R472 contribute to the L-glutamine site; that span reads LGLQ. Catalysis depends on residues H519 and E521.

It belongs to the CTP synthase family. Homotetramer.

The catalysed reaction is UTP + L-glutamine + ATP + H2O = CTP + L-glutamate + ADP + phosphate + 2 H(+). It catalyses the reaction L-glutamine + H2O = L-glutamate + NH4(+). The enzyme catalyses UTP + NH4(+) + ATP = CTP + ADP + phosphate + 2 H(+). It functions in the pathway pyrimidine metabolism; CTP biosynthesis via de novo pathway; CTP from UDP: step 2/2. Allosterically activated by GTP, when glutamine is the substrate; GTP has no effect on the reaction when ammonia is the substrate. The allosteric effector GTP functions by stabilizing the protein conformation that binds the tetrahedral intermediate(s) formed during glutamine hydrolysis. Inhibited by the product CTP, via allosteric rather than competitive inhibition. In terms of biological role, catalyzes the ATP-dependent amination of UTP to CTP with either L-glutamine or ammonia as the source of nitrogen. Regulates intracellular CTP levels through interactions with the four ribonucleotide triphosphates. This is CTP synthase from Thermobifida fusca (strain YX).